Here is a 51-residue protein sequence, read N- to C-terminus: Large ribosomal subunit protein eL39 (51 aa).

The interval 32 to 51 (KGSVKQHPKMRHWRRNTLKK) is disordered. The span at 33–51 (GSVKQHPKMRHWRRNTLKK) shows a compositional bias: basic residues.

This sequence belongs to the eukaryotic ribosomal protein eL39 family.

This chain is Large ribosomal subunit protein eL39, found in Methanococcus vannielii (strain ATCC 35089 / DSM 1224 / JCM 13029 / OCM 148 / SB).